Reading from the N-terminus, the 699-residue chain is Chitin synthase 7 (699 aa).

The next 6 membrane-spanning stretches (helical) occupy residues 19-39 (IVGVVMLAAVLEWFLWIAAFL), 58-80 (SVVVALLFTALRSIFLPIMVVTL), 98-118 (LQWFGFWCFAGLLTVPWLFCI), 445-465 (FMQNTIRTTALLFFIMVLAII), 474-494 (LPVGFIAVSLGLNWLLMIYFG), and 507-527 (VMFVVNPFFNWFYMVYGIFTA). The segment at 628 to 648 (AAGGSGEASEPGTRWAPDPRE) is disordered.

This sequence belongs to the chitin synthase family. Class VI subfamily.

The protein localises to the cell membrane. It catalyses the reaction [(1-&gt;4)-N-acetyl-beta-D-glucosaminyl](n) + UDP-N-acetyl-alpha-D-glucosamine = [(1-&gt;4)-N-acetyl-beta-D-glucosaminyl](n+1) + UDP + H(+). Polymerizes chitin, a structural polymer of the cell wall and septum, by transferring the sugar moiety of UDP-GlcNAc to the non-reducing end of the growing chitin polymer. Plays a role in cell wall integrity. Required to successfully penetrate the host plants and thus plays a key role in pathogenicity. This chain is Chitin synthase 7, found in Verticillium dahliae (strain VdLs.17 / ATCC MYA-4575 / FGSC 10137) (Verticillium wilt).